Reading from the N-terminus, the 348-residue chain is MAFSYNYSLQASYPSQRAYVPYQQTQVPTPSPIYSLPITNTTTSGALSPSSCFLSVRQQPKEALVTVKGKEKFRKPLDPPPMLELKVSSDIDPSQQFLQNPYLFVSVSLYKHDKDEPIEGTPFDVLAGTLVSSLHRLKDVNNKDGAFFIFGDISIKVQGTYRLRFTLYELQPSYFTLSDLEQHKDLERYQGAALDPPEYGTYQCLGHVLSDKFNVVLPKDFKGLEESTYLSRAFSDQGVRLRLRKEARGMMSNKRSISGSGDLTSDQSQQQQQQQPLAKKRREDSVESANPSSLMSGFYQNVSPFVNTPYLQSQGLQGQTLQNQGLQAPVRHDTSYAWNLAYDPSFMG.

One can recognise a Velvet domain in the interval 46–244 (ALSPSSCFLS…SDQGVRLRLR (199 aa)). Residues 250-294 (MMSNKRSISGSGDLTSDQSQQQQQQQPLAKKRREDSVESANPSSL) are disordered. Positions 253–266 (NKRSISGSGDLTSD) are enriched in polar residues. Positions 274–280 (QQPLAKK) match the Nuclear localization signal motif.

The protein belongs to the velvet family. VosA subfamily. As to quaternary structure, forms a heterodimeric complex with VEL2; the formation of the VEL2-VOS1 complex is light-dependent.

It localises to the nucleus. In terms of biological role, component of the velB-VosA heterodimeric complex that plays a dual role in activating genes associated with spore maturation and repressing certain development-associated genes. The complex binds DNA through the DNA-binding domain of vosA that recognizes an 11-nucleotide consensus sequence 5'-CTGGCCGCGGC-3' consisting of two motifs in the promoters of key developmental regulatory genes. Regulates spore viability, trehalose accumulation, and tolerance to thermal and oxidative as well as ion stresses. Positively regulates conidial pigmentation and pathogenicity on barley. This is Spore development regulator vosA from Cochliobolus sativus (strain ND90Pr / ATCC 201652) (Common root rot and spot blotch fungus).